A 310-amino-acid polypeptide reads, in one-letter code: Probable GTP 3',8-cyclase (310 aa).

Residues 5–232 (RFGRPVTNLR…RRRKYFIPID (228 aa)) form the Radical SAM core domain. Arg-14 is a GTP binding site. Positions 21 and 25 each coordinate [4Fe-4S] cluster. Residue Tyr-27 coordinates S-adenosyl-L-methionine. Residue Cys-28 participates in [4Fe-4S] cluster binding. Lys-61 is a binding site for GTP. Gly-65 contacts S-adenosyl-L-methionine. A GTP-binding site is contributed by Thr-90. Residue Ser-114 participates in S-adenosyl-L-methionine binding. GTP is bound at residue Lys-150. Met-189 is an S-adenosyl-L-methionine binding site. [4Fe-4S] cluster contacts are provided by Cys-250 and Cys-253. Position 255-257 (255-257 (RLR)) interacts with GTP. Residue Cys-267 participates in [4Fe-4S] cluster binding.

This sequence belongs to the radical SAM superfamily. MoaA family. [4Fe-4S] cluster serves as cofactor.

The catalysed reaction is GTP + AH2 + S-adenosyl-L-methionine = (8S)-3',8-cyclo-7,8-dihydroguanosine 5'-triphosphate + 5'-deoxyadenosine + L-methionine + A + H(+). The protein operates within cofactor biosynthesis; molybdopterin biosynthesis. In terms of biological role, catalyzes the cyclization of GTP to (8S)-3',8-cyclo-7,8-dihydroguanosine 5'-triphosphate. The sequence is that of Probable GTP 3',8-cyclase from Pyrococcus horikoshii (strain ATCC 700860 / DSM 12428 / JCM 9974 / NBRC 100139 / OT-3).